We begin with the raw amino-acid sequence, 174 residues long: Nucleoside-triphosphatase THEP1 (174 aa).

ATP-binding positions include 7-14 and 94-101; these read GRPGVGKT and LIIVDEIG.

This sequence belongs to the THEP1 NTPase family.

It catalyses the reaction a ribonucleoside 5'-triphosphate + H2O = a ribonucleoside 5'-diphosphate + phosphate + H(+). Has nucleotide phosphatase activity towards ATP, GTP, CTP, TTP and UTP. May hydrolyze nucleoside diphosphates with lower efficiency. The chain is Nucleoside-triphosphatase THEP1 from Thermotoga maritima (strain ATCC 43589 / DSM 3109 / JCM 10099 / NBRC 100826 / MSB8).